The chain runs to 329 residues: uncharacterized protein (329 aa).

2 disordered regions span residues 16–41 (RCGY…SRIC) and 183–229 (LENK…KFEP). Positions 213-229 (SNDKANRGEKGEAKFEP) are enriched in basic and acidic residues.

As to expression, expressed in testis and epididymis. Expressed at lower levels in ovary.

In terms of biological role, dispensable for normal development and fertility. This is an uncharacterized protein from Mus musculus (Mouse).